The chain runs to 439 residues: 3-phosphoshikimate 1-carboxyvinyltransferase (439 aa).

The 3-phosphoshikimate site is built by Lys-25, Ser-26, and Arg-30. Position 25 (Lys-25) interacts with phosphoenolpyruvate. Phosphoenolpyruvate is bound by residues Gly-96 and Arg-124. 3-phosphoshikimate-binding residues include Ser-170, Ser-171, Gln-172, Ser-202, Asp-324, and Lys-351. Gln-172 is a binding site for phosphoenolpyruvate. Asp-324 (proton acceptor) is an active-site residue. Residues Arg-355, Arg-399, and Lys-424 each coordinate phosphoenolpyruvate.

The protein belongs to the EPSP synthase family. In terms of assembly, monomer.

The protein resides in the cytoplasm. It carries out the reaction 3-phosphoshikimate + phosphoenolpyruvate = 5-O-(1-carboxyvinyl)-3-phosphoshikimate + phosphate. Its pathway is metabolic intermediate biosynthesis; chorismate biosynthesis; chorismate from D-erythrose 4-phosphate and phosphoenolpyruvate: step 6/7. Its function is as follows. Catalyzes the transfer of the enolpyruvyl moiety of phosphoenolpyruvate (PEP) to the 5-hydroxyl of shikimate-3-phosphate (S3P) to produce enolpyruvyl shikimate-3-phosphate and inorganic phosphate. In Bordetella avium (strain 197N), this protein is 3-phosphoshikimate 1-carboxyvinyltransferase.